A 218-amino-acid chain; its full sequence is Uracil-DNA glycosylase (218 aa).

The active-site Proton acceptor is the Asp-68.

Belongs to the uracil-DNA glycosylase (UDG) superfamily. UNG family. Homodimer. Interacts with protein OPG148. Component of the Uracil-DNA glycosylase(UDG)-OPG148-polymerase complex; OPG148 and UDG form a heterodimeric processivity factor that associates with OPG71 to form the processive polymerase holoenzyme.

It catalyses the reaction Hydrolyzes single-stranded DNA or mismatched double-stranded DNA and polynucleotides, releasing free uracil.. Functionally, plays an essential role in viral replication as a component of the DNA polymerase processivity factor. Excises uracil residues from the DNA which can arise as a result of misincorporation of dUMP residues by DNA polymerase or due to deamination of cytosine. The polypeptide is Uracil-DNA glycosylase (OPG116) (Homo sapiens (Human)).